Reading from the N-terminus, the 103-residue chain is N(4)-acetylcytidine amidohydrolase (103 aa).

The ASCH domain occupies 6–101 (ITFFQRFQDD…QTQFYVIEFK (96 aa)). The Proton acceptor role is filled by K21. Residue T24 is the Nucleophile of the active site. The Proton donor role is filled by E74.

Belongs to the N(4)-acetylcytidine amidohydrolase family.

It carries out the reaction N(4)-acetylcytidine + H2O = cytidine + acetate + H(+). It catalyses the reaction N(4)-acetyl-2'-deoxycytidine + H2O = 2'-deoxycytidine + acetate + H(+). The catalysed reaction is N(4)-acetylcytosine + H2O = cytosine + acetate + H(+). In terms of biological role, catalyzes the hydrolysis of N(4)-acetylcytidine (ac4C). This is N(4)-acetylcytidine amidohydrolase (yqfB) from Escherichia coli O8 (strain IAI1).